We begin with the raw amino-acid sequence, 512 residues long: Maturase K (512 aa).

This sequence belongs to the intron maturase 2 family. MatK subfamily.

It localises to the plastid. The protein localises to the chloroplast. Its function is as follows. Usually encoded in the trnK tRNA gene intron. Probably assists in splicing its own and other chloroplast group II introns. This is Maturase K from Lemna minor (Common duckweed).